The following is a 135-amino-acid chain: Histone H2A (135 aa).

The protein belongs to the histone H2A family. As to quaternary structure, the nucleosome is a histone octamer containing two molecules each of H2A, H2B, H3 and H4 assembled in one H3-H4 heterotetramer and two H2A-H2B heterodimers. The octamer wraps approximately 147 bp of DNA.

It is found in the nucleus. The protein resides in the chromosome. Functionally, core component of nucleosome. Nucleosomes wrap and compact DNA into chromatin, limiting DNA accessibility to the cellular machineries which require DNA as a template. Histones thereby play a central role in transcription regulation, DNA repair, DNA replication and chromosomal stability. DNA accessibility is regulated via a complex set of post-translational modifications of histones, also called histone code, and nucleosome remodeling. The protein is Histone H2A of Trypanosoma cruzi.